A 963-amino-acid polypeptide reads, in one-letter code: Ubiquitin carboxyl-terminal hydrolase 4 (963 aa).

A DUSP domain is found at 11-122; that stretch reads PDAETQKSEL…GQQPIVRKVV (112 aa). A necessary for interaction with SART3 region spans residues 27 to 216; sequence TLQRGAQWYL…LYQGQVLVIE (190 aa). The short motif at 133–141 is the Nuclear export signal element; the sequence is VEVYLLELK. One can recognise a Ubiquitin-like 1 domain in the interval 142–226; sequence LCENSDPTNV…PQNEDGTWPR (85 aa). The interval 219–277 is disordered; sequence NEDGTWPRQTQQSKSSTAPSRNFTTSPKSSASPYSSVSASPIANGDSTNTSGMHSSGVS. A compositionally biased stretch (polar residues) spans 225–243; it reads PRQTQQSKSSTAPSRNFTT. A required for USP4 activation by providing conformational flexibility between the DUSP and catalytic domains region spans residues 229-295; sequence QQSKSSTAPS…SYNCQESPLT (67 aa). A compositionally biased stretch (low complexity) spans 244-261; the sequence is SPKSSASPYSSVSASPIA. One can recognise a USP domain in the interval 302-923; the sequence is CGLGNLGNTC…AAYVLFYQRR (622 aa). Cysteine 311 serves as the catalytic Nucleophile. A regulates ubiquitin dissociation region spans residues 384–386; sequence PQF. The segment at 405–407 is necessary for interaction with RBL2; that stretch reads LHE. Phosphoserine is present on serine 445. The necessary for interaction with RB1 and RBL2 stretch occupies residues 459–463; the sequence is LVCPE. Cysteine 461 and cysteine 464 together coordinate Zn(2+). Positions 483-571 constitute a Ubiquitin-like 2 domain; sequence LKKDRVMEIF…IFVYEVCSTS (89 aa). An interacts with DUSP and ubiquitin-like 1 domains and is required for USP4 activation region spans residues 485-775; it reads KDRVMEIFLV…LQPQKKKKTA (291 aa). Residues 634 to 701 form a disordered region; that stretch reads PLPDESGSSP…ATQKKNKGRP (68 aa). Residues serine 675 and serine 680 each carry the phosphoserine modification. The Nuclear localization signal signature appears at 767-772; that stretch reads QPQKKK. Residues cysteine 799 and cysteine 802 each coordinate Zn(2+). Histidine 881 (proton acceptor) is an active-site residue. Positions 930–963 are disordered; it reads TPSLSFPGSSDGGARPSSSQQGTGDDETYSMDTN. The segment covering 953–963 has biased composition (acidic residues); it reads GDDETYSMDTN.

The protein belongs to the peptidase C19 family. USP4 subfamily. Interacts with RB1 (both dephosphorylated and hypophosphorylated forms). Interacts with RBL1 and RBL2. Interacts with ADORA2A (via cytoplasmic C-terminus); the interaction is direct. Interacts with SART3; recruits USP4 to its substrate PRPF3. In terms of processing, phosphorylated at Ser-445 by PKB/AKT1 in response to EGF stimulus, promoting its ability deubiquitinate RHEB. Post-translationally, monoubiquitinated by TRIM21. Ubiquitination does not lead to its proteasomal degradation. Autodeubiquitinated.

The protein resides in the cytoplasm. The protein localises to the nucleus. It carries out the reaction Thiol-dependent hydrolysis of ester, thioester, amide, peptide and isopeptide bonds formed by the C-terminal Gly of ubiquitin (a 76-residue protein attached to proteins as an intracellular targeting signal).. With respect to regulation, the completion of the deubiquitinase reaction is mediated by the DUSP and ubiquitin-like 1 domains which promotes the release of ubiquitin from the catalytic site enabling subsequent reactions to occur. In terms of biological role, deubiquitinating enzyme that removes conjugated ubiquitin from target proteins. Deubiquitinates PDPK1. Deubiquitinates TRIM21. Deubiquitinates receptor ADORA2A which increases the amount of functional receptor at the cell surface. Deubiquitinates HAS2. Deubiquitinates RHEB in response to EGF signaling, promoting mTORC1 signaling. May regulate mRNA splicing through deubiquitination of the U4 spliceosomal protein PRPF3. This may prevent its recognition by the U5 component PRPF8 thereby destabilizing interactions within the U4/U6.U5 snRNP. May also play a role in the regulation of quality control in the ER. This chain is Ubiquitin carboxyl-terminal hydrolase 4 (USP4), found in Bos taurus (Bovine).